Reading from the N-terminus, the 315-residue chain is AT-hook motif nuclear-localized protein 19 (315 aa).

Over residues 1 to 25 the composition is skewed to polar residues; it reads MANPWWTGQVNLSGLETTPPGSSQL. 2 disordered regions span residues 1–104 and 239–285; these read MANP…RDSP and EEEA…YNMP. A compositionally biased stretch (basic and acidic residues) spans 61–74; that stretch reads DNLSGDDHEPREGA. Residues 80–92 constitute a DNA-binding region (a.T hook); the sequence is RRPRGRPAGSKNK. One can recognise a PPC domain in the interval 104-248; that stretch reads PNALKSHVME…EEEAAERGGG (145 aa). A compositionally biased stretch (gly residues) spans 245 to 276; sequence RGGGGGSGGVVPGQLGGGGSPLSSGAGGGDGN.

As to expression, slightly expressed in roots.

Its subcellular location is the nucleus. Transcription factor that specifically binds AT-rich DNA sequences related to the nuclear matrix attachment regions (MARs). Negatively regulates plant innate immunity (PTI) to pathogens through the down-regulation of the PAMP-triggered FRK1 expression. Positively regulates defense against fungal Verticillium infection. This is AT-hook motif nuclear-localized protein 19 from Arabidopsis thaliana (Mouse-ear cress).